Reading from the N-terminus, the 499-residue chain is Probable lipid II flippase MurJ (499 aa).

Helical transmembrane passes span 4–24, 26–46, 88–108, 130–150, 154–174, 184–204, 227–247, 265–285, 297–317, 335–355, 375–395, 396–416, 425–445, and 455–475; these read LFRASLLFSLGILLSRIFGYV, DATVAYYFGASAVSDAFFIAF, LLITFSLSVVIIGLLFPEEII, FTILYLPLVSFYAYSMAILLV, FFVPSVSQTLFNLGFILSLVI, LALAVLIGGLFQIIPNTFLLF, FLFTLGGFSANQLSLFVDTFL, IYLLPISLFSISLSNTLLALV, TALKLTLMLSIPSSFGLFFLS, LFYTSGLLSLYAFSVPFYSLQ, AFLSVFLEALFGSVFIFLLNF, GVYSFPLAALISSSSVLVYLY, IPFGNLIKYLIASSFMGGLVY, and FILVSFIPIYALFYYVFLIIL.

This sequence belongs to the MurJ/MviN family.

Its subcellular location is the cell inner membrane. It participates in cell wall biogenesis; peptidoglycan biosynthesis. In terms of biological role, involved in peptidoglycan biosynthesis. Transports lipid-linked peptidoglycan precursors from the inner to the outer leaflet of the cytoplasmic membrane. The polypeptide is Probable lipid II flippase MurJ (Aquifex aeolicus (strain VF5)).